Here is a 252-residue protein sequence, read N- to C-terminus: Chitooligosaccharide deacetylase (252 aa).

Residues histidine 61 and histidine 125 each coordinate Mg(2+).

It belongs to the YdjC deacetylase family. ChbG subfamily. In terms of assembly, homodimer. Mg(2+) is required as a cofactor.

Its subcellular location is the cytoplasm. It catalyses the reaction N,N'-diacetylchitobiose + H2O = N-acetyl-beta-D-glucosaminyl-(1-&gt;4)-D-glucosamine + acetate. The catalysed reaction is diacetylchitobiose-6'-phosphate + H2O = N'-monoacetylchitobiose-6'-phosphate + acetate. Its pathway is glycan degradation; chitin degradation. Involved in the degradation of chitin. ChbG is essential for growth on the acetylated chitooligosaccharides chitobiose and chitotriose but is dispensable for growth on cellobiose and chitosan dimer, the deacetylated form of chitobiose. Deacetylation of chitobiose-6-P and chitotriose-6-P is necessary for both the activation of the chb promoter by the regulatory protein ChbR and the hydrolysis of phosphorylated beta-glucosides by the phospho-beta-glucosidase ChbF. Catalyzes the removal of only one acetyl group from chitobiose-6-P to yield monoacetylchitobiose-6-P, the inducer of ChbR and the substrate of ChbF. The sequence is that of Chitooligosaccharide deacetylase from Salmonella typhi.